The sequence spans 301 residues: Ribosomal RNA small subunit methyltransferase A (301 aa).

Residues asparagine 23, isoleucine 25, glycine 50, glutamate 72, aspartate 97, and asparagine 149 each coordinate S-adenosyl-L-methionine.

It belongs to the class I-like SAM-binding methyltransferase superfamily. rRNA adenine N(6)-methyltransferase family. RsmA subfamily.

The protein localises to the cytoplasm. The catalysed reaction is adenosine(1518)/adenosine(1519) in 16S rRNA + 4 S-adenosyl-L-methionine = N(6)-dimethyladenosine(1518)/N(6)-dimethyladenosine(1519) in 16S rRNA + 4 S-adenosyl-L-homocysteine + 4 H(+). Functionally, specifically dimethylates two adjacent adenosines (A1518 and A1519) in the loop of a conserved hairpin near the 3'-end of 16S rRNA in the 30S particle. May play a critical role in biogenesis of 30S subunits. The sequence is that of Ribosomal RNA small subunit methyltransferase A from Rickettsia peacockii (strain Rustic).